The primary structure comprises 274 residues: Rhamnulose-1-phosphate aldolase (274 aa).

Residue Glu-117 is part of the active site. The Zn(2+) site is built by His-141, His-143, and His-212.

This sequence belongs to the aldolase class II family. RhaD subfamily. As to quaternary structure, homotetramer. Zn(2+) serves as cofactor.

The protein resides in the cytoplasm. The catalysed reaction is L-rhamnulose 1-phosphate = (S)-lactaldehyde + dihydroxyacetone phosphate. It participates in carbohydrate degradation; L-rhamnose degradation; glycerone phosphate from L-rhamnose: step 3/3. Its function is as follows. Catalyzes the reversible cleavage of L-rhamnulose-1-phosphate to dihydroxyacetone phosphate (DHAP) and L-lactaldehyde. In Shigella sonnei (strain Ss046), this protein is Rhamnulose-1-phosphate aldolase.